A 674-amino-acid chain; its full sequence is MLTSYQLESPALSWGEDGAPHSNQFDDVYFDKESGLEETRHVFLKNNQLSGRWASLQKNAFVIAETGFGTGLNFLCAWQAFLTEAASDKQLHFISVEKYPMTKSMLTDALKMWPSISHLSQQLIDAYPEVCHGLHRIELEQGRIQLTLWFGEAEDGFAALDADVDAWFLDGFAPSKNPEMWSDNLFKHIHRLSHQGTTFSTFTAAGIVRRGLKNVGFDVRKVKGFGQKREMTVGELNSSTAPLSARMSQGQAWFNLRQDKTSEITKVLVVGAGLAGANTAYALAKQGIKVEVWEQGNCIAGGASGNPQGMLYPKLASQDTPVNRFYLSAYLHATRLYSSLDRHKQFWDACGLIQIPKNDKEAVRFQKLLDEKLYPEAILQASKDREGCLFLPLSGWVVLTQLCETLLSHENIHVCLNTKLESLSPIELDDKTFGWQARSKYQQAPLNDRQACFSHVVLCTANDTKALGVTPKTPDYPIRGQVSFMDIEKAKAACQTIGESADKIDFDKILCEFGYVSPSINGLLHFGSTYDLKDLDDRVREEGHKRNLAILESLLLLPKETFNSEDCGGRVSFRCAVPDYTPIVGPVQSEDVYQQAYSTLTKNAKWQSNEIAEPIKQLYINIGHGSRGLISTPLSGSYIASLITGTPSPLEQKVSHKLHPSRFIIRDLKRSQIL.

The tract at residues 1–237 (MLTSYQLESP…KREMTVGELN (237 aa)) is tRNA (mnm(5)s(2)U34)-methyltransferase. Residues 270-674 (VGAGLAGANT…IRDLKRSQIL (405 aa)) are FAD-dependent cmnm(5)s(2)U34 oxidoreductase.

In the N-terminal section; belongs to the methyltransferase superfamily. tRNA (mnm(5)s(2)U34)-methyltransferase family. The protein in the C-terminal section; belongs to the DAO family. FAD is required as a cofactor.

The protein localises to the cytoplasm. The enzyme catalyses 5-aminomethyl-2-thiouridine(34) in tRNA + S-adenosyl-L-methionine = 5-methylaminomethyl-2-thiouridine(34) in tRNA + S-adenosyl-L-homocysteine + H(+). Functionally, catalyzes the last two steps in the biosynthesis of 5-methylaminomethyl-2-thiouridine (mnm(5)s(2)U) at the wobble position (U34) in tRNA. Catalyzes the FAD-dependent demodification of cmnm(5)s(2)U34 to nm(5)s(2)U34, followed by the transfer of a methyl group from S-adenosyl-L-methionine to nm(5)s(2)U34, to form mnm(5)s(2)U34. This is tRNA 5-methylaminomethyl-2-thiouridine biosynthesis bifunctional protein MnmC from Marinomonas sp. (strain MWYL1).